We begin with the raw amino-acid sequence, 218 residues long: Capsid protein (218 aa).

M1 carries the post-translational modification N-acetylmethionine; by host. A disordered region spans residues 1–31; the sequence is MDKSGSPNASRTSRRRRPRRGSRSASGADAG. Basic residues predominate over residues 12–22; it reads TSRRRRPRRGS.

This sequence belongs to the cucumovirus capsid protein family.

Its subcellular location is the virion. Capsid protein. Probably binds RNA and plays a role in packaging. This is Capsid protein from Cucumber mosaic virus (strain Trk7) (CMV).